The sequence spans 644 residues: Tripeptidyl-peptidase sed1 (644 aa).

Residues 1 to 18 (MRLSHVLLGTAAAAGVLA) form the signal peptide. A propeptide spans 19-196 (SPTPNDYVVH…KARSIEKRSF (178 aa)) (removed in mature form). The region spanning 224–643 (AITPLCISAL…PALLDLFMSL (420 aa)) is the Peptidase S53 domain. A glycan (N-linked (GlcNAc...) asparagine) is linked at N235. Active-site charge relay system residues include E300 and D304. 3 N-linked (GlcNAc...) asparagine glycosylation sites follow: N326, N332, and N519. S561 functions as the Charge relay system in the catalytic mechanism. Positions 602, 603, 621, and 623 each coordinate Ca(2+).

The cofactor is Ca(2+). Post-translationally, N-glycosylated.

The protein localises to the secreted. The protein resides in the extracellular space. It carries out the reaction Release of an N-terminal tripeptide from a polypeptide.. Secreted tripeptidyl-peptidase which degrades proteins at acidic pHs and is involved in virulence. The chain is Tripeptidyl-peptidase sed1 (sed1) from Aspergillus fumigatus (strain ATCC MYA-4609 / CBS 101355 / FGSC A1100 / Af293) (Neosartorya fumigata).